The sequence spans 115 residues: Large ribosomal subunit protein uL22 (115 aa).

It belongs to the universal ribosomal protein uL22 family. As to quaternary structure, part of the 50S ribosomal subunit.

In terms of biological role, this protein binds specifically to 23S rRNA; its binding is stimulated by other ribosomal proteins, e.g. L4, L17, and L20. It is important during the early stages of 50S assembly. It makes multiple contacts with different domains of the 23S rRNA in the assembled 50S subunit and ribosome. Functionally, the globular domain of the protein is located near the polypeptide exit tunnel on the outside of the subunit, while an extended beta-hairpin is found that lines the wall of the exit tunnel in the center of the 70S ribosome. This is Large ribosomal subunit protein uL22 from Streptomyces griseus subsp. griseus (strain JCM 4626 / CBS 651.72 / NBRC 13350 / KCC S-0626 / ISP 5235).